Here is a 488-residue protein sequence, read N- to C-terminus: Kynurenine 3-monooxygenase 2 (488 aa).

It belongs to the aromatic-ring hydroxylase family. KMO subfamily. FAD is required as a cofactor.

It localises to the mitochondrion outer membrane. It catalyses the reaction L-kynurenine + NADPH + O2 + H(+) = 3-hydroxy-L-kynurenine + NADP(+) + H2O. It participates in cofactor biosynthesis; NAD(+) biosynthesis; quinolinate from L-kynurenine: step 1/3. Its function is as follows. Catalyzes the hydroxylation of L-kynurenine (L-Kyn) to form 3-hydroxy-L-kynurenine (L-3OHKyn). Required for synthesis of quinolinic acid. The protein is Kynurenine 3-monooxygenase 2 (bna4-2) of Aspergillus niger (strain ATCC MYA-4892 / CBS 513.88 / FGSC A1513).